A 468-amino-acid polypeptide reads, in one-letter code: Microtubule-associated tyrosine carboxypeptidase 1 (468 aa).

Over residues 1–10 (MVLDSGTQVY) the composition is skewed to polar residues. 2 disordered regions span residues 1–39 (MVLD…PPLY) and 77–112 (MKRS…TLRP). Zn(2+) is bound at residue histidine 277. The active-site Nucleophile is glutamate 278. Zn(2+) contacts are provided by histidine 282 and glutamate 313.

Belongs to the peptidase MATCAP family. The cofactor is Zn(2+).

It localises to the cytoplasm. It is found in the cytoskeleton. The enzyme catalyses C-terminal L-alpha-aminoacyl-L-glutamyl-L-glutamyl-L-tyrosyl-[tubulin] + H2O = C-terminal L-alpha-aminoacyl-L-glutamyl-L-glutamyl-[tubulin] + L-tyrosine. The catalysed reaction is C-terminal L-alpha-aminoacyl-L-glutamyl-L-glutamyl-L-phenylalanyl-[tubulin] + H2O = C-terminal L-alpha-aminoacyl-L-glutamyl-L-glutamyl-[tubulin] + L-phenylalanine. Tyrosine carboxypeptidase that removes the C-terminal tyrosine residue of alpha-tubulin, thereby regulating microtubule dynamics and function. Also able to remove the C-terminal phenylalanine residue of alpha-tubulin TUBA8. Recognizes adjacent tubulin dimers along the same protofilament. This Rattus norvegicus (Rat) protein is Microtubule-associated tyrosine carboxypeptidase 1.